The sequence spans 116 residues: uncharacterized protein (116 aa).

Residues 76 to 116 (VPPPRYSYIRSESSRNNLRNSARNQPQNLVSEQDSDSNREN) are disordered. Low complexity predominate over residues 85–99 (RSESSRNNLRNSARN).

This is an uncharacterized protein from Glycine max (Soybean).